A 252-amino-acid chain; its full sequence is E3 ubiquitin-protein ligase MARCHF3 (252 aa).

Residues 62–122 form an RING-CH-type zinc finger; that stretch reads SSFNDHPMCR…ELCHFRFSVE (61 aa). Zn(2+) contacts are provided by Cys-70, Cys-73, Cys-86, Cys-88, His-96, Cys-99, Cys-112, and Cys-115. 2 helical membrane-spanning segments follow: residues 144–164 and 181–201; these read LFGD…SGWL and AVGL…WTLV.

It is found in the cytoplasmic vesicle membrane. The protein resides in the early endosome membrane. It carries out the reaction S-ubiquitinyl-[E2 ubiquitin-conjugating enzyme]-L-cysteine + [acceptor protein]-L-lysine = [E2 ubiquitin-conjugating enzyme]-L-cysteine + N(6)-ubiquitinyl-[acceptor protein]-L-lysine.. It participates in protein modification; protein ubiquitination. Functionally, E3 ubiquitin-protein ligase which may be involved in endosomal trafficking. E3 ubiquitin ligases accept ubiquitin from an E2 ubiquitin-conjugating enzyme in the form of a thioester and then directly transfer the ubiquitin to targeted substrates. The protein is E3 ubiquitin-protein ligase MARCHF3 (marchf3) of Xenopus laevis (African clawed frog).